Consider the following 502-residue polypeptide: Cytochrome P450 71B19 (502 aa).

A helical transmembrane segment spans residues 1–21 (MAISFLCVFLITFVSLIFFAK). Residue Cys-444 participates in heme binding.

Belongs to the cytochrome P450 family. Requires heme as cofactor.

It is found in the membrane. In Arabidopsis thaliana (Mouse-ear cress), this protein is Cytochrome P450 71B19 (CYP71B19).